A 173-amino-acid chain; its full sequence is ATP synthase subunit b (173 aa).

The helical transmembrane segment at 15–35 threads the bilayer; it reads LYVGDMLFYAILFIVLMALIA.

It belongs to the ATPase B chain family. F-type ATPases have 2 components, F(1) - the catalytic core - and F(0) - the membrane proton channel. F(1) has five subunits: alpha(3), beta(3), gamma(1), delta(1), epsilon(1). F(0) has three main subunits: a(1), b(2) and c(10-14). The alpha and beta chains form an alternating ring which encloses part of the gamma chain. F(1) is attached to F(0) by a central stalk formed by the gamma and epsilon chains, while a peripheral stalk is formed by the delta and b chains.

The protein resides in the cell membrane. In terms of biological role, f(1)F(0) ATP synthase produces ATP from ADP in the presence of a proton or sodium gradient. F-type ATPases consist of two structural domains, F(1) containing the extramembraneous catalytic core and F(0) containing the membrane proton channel, linked together by a central stalk and a peripheral stalk. During catalysis, ATP synthesis in the catalytic domain of F(1) is coupled via a rotary mechanism of the central stalk subunits to proton translocation. Functionally, component of the F(0) channel, it forms part of the peripheral stalk, linking F(1) to F(0). The protein is ATP synthase subunit b of Pediococcus pentosaceus (strain ATCC 25745 / CCUG 21536 / LMG 10740 / 183-1w).